The following is an 861-amino-acid chain: MRVKEIRKNYQHLWRWGIMLRWGTMLLGMLMICSAAEQLWVTVYYGVPVWKEATTTLFCASDAKAYDTEAHNVWATHACVPTDPNPQEVVLVNVTENFNMWKNNMVEQMHENIISLWDQSLKPCVKLTPLCVTLHCTDLRNTTNNNSSIEEKMKGEIKNCSFNVTTNIRDKVQKEYALFYKLDVVPIDNDNNSTNTCYRLISCDTSVITQACPKVSFEPIPIHYCTPAGFALLKCNNKTFNGTGPCKNVSTVQCTHGIRPVVSTQLLLNGSLAEEGVVIRSENFTDNVKTIIVQLNETVKINCIRPNNKTRKRVTMGPGRVYYTTGEIIGDIRQAHCNISRAEWNKTLEQIANKLRKQFENKTIVFNQSSGGDPEIVMHNFNCGGEFFYCDSSQLFNSTHLSNGTWWNGTGPENITLPCRIKQIVNMWQEVGKAMYAPPIRGQIRCSSNITGLLLTRDGGNTQNNNTNSSIEIFRPGGGDMRDNWRSELYKYKVVKIEPLGVAPTRAKRRVVQREKRAVGIGAVFLGFLGAAGSTMGAAAVTLTVQARQLLPGIVQQQNNLLRAIDAQQHLLQLTVWGIKQLQARVLAVERYLKDQQLMGIWGCSGKFICTTAVPWNTSWSNKSFNEIWDNMTWMEWEREINNYTNLIYNLIEESQNQQEKNEQDLLALDKWDSLWNWFSITKWLWYIKIFIMIVGGLVGLRIVFTVLSIVNRVRQGYSPLSFQTRLPARGPDRPEGIEEEGGERDRDRSGPLVDGLLALIWVDLRSLCLFSYHRLRDLLLIVTRTVELLGRKGWEVLKYLWNLLQYWSQELKNSAVSLLNATAIAVAEGTDRVIEILQRTYRAILHIPVKIRQGLERALL.

The signal sequence occupies residues 1–37; it reads MRVKEIRKNYQHLWRWGIMLRWGTMLLGMLMICSAAE. Residues 38–690 lie on the Extracellular side of the membrane; the sequence is QLWVTVYYGV…ITKWLWYIKI (653 aa). Cys59 and Cys79 form a disulfide bridge. N-linked (GlcNAc...) asparagine; by host glycans are attached at residues Asn93, Asn141, Asn145, Asn146, Asn159, Asn163, Asn191, Asn192, Asn237, Asn241, Asn248, Asn269, Asn283, Asn296, Asn308, Asn338, Asn345, Asn361, and Asn367. Disulfide bonds link Cys124–Cys212, Cys131–Cys203, Cys136–Cys160, Cys225–Cys254, and Cys235–Cys246. Positions 136 to 159 are V1; that stretch reads CTDLRNTTNNNSSIEEKMKGEIKN. The segment at 160-203 is V2; it reads CSFNVTTNIRDKVQKEYALFYKLDVVPIDNDNNSTNTCYRLISC. The V3 stretch occupies residues 303–336; that stretch reads CIRPNNKTRKRVTMGPGRVYYTTGEIIGDIRQAH. Cys303 and Cys337 are joined by a disulfide. The CD4-binding loop stretch occupies residues 369–379; the sequence is SSGGDPEIVMH. 2 disulfides stabilise this stretch: Cys383-Cys446 and Cys390-Cys419. The segment at 390-419 is V4; sequence CDSSQLFNSTHLSNGTWWNGTGPENITLPC. 7 N-linked (GlcNAc...) asparagine; by host glycosylation sites follow: Asn397, Asn403, Asn408, Asn414, Asn449, Asn465, and Asn468. V5 regions lie at residues 462–477 and 464–477; these read TQNN…FRPG and NNNT…FRPG. The fusion peptide stretch occupies residues 518-538; sequence AVGIGAVFLGFLGAAGSTMGA. The tract at residues 580–598 is immunosuppression; the sequence is KQLQARVLAVERYLKDQQL. Cysteines 604 and 610 form a disulfide. Residues Asn617, Asn622, Asn631, and Asn643 are each glycosylated (N-linked (GlcNAc...) asparagine; by host). Residues 639-673 adopt a coiled-coil conformation; the sequence is REINNYTNLIYNLIEESQNQQEKNEQDLLALDKWD. The interval 668-689 is MPER; binding to GalCer; that stretch reads ALDKWDSLWNWFSITKWLWYIK. The chain crosses the membrane as a helical span at residues 691–711; it reads FIMIVGGLVGLRIVFTVLSIV. Over 712–861 the chain is Cytoplasmic; it reads NRVRQGYSPL…IRQGLERALL (150 aa). The YXXL motif; contains endocytosis signal signature appears at 718-721; it reads YSPL. Positions 725 to 749 are disordered; that stretch reads TRLPARGPDRPEGIEEEGGERDRDR. A lipid anchor (S-palmitoyl cysteine; by host) is attached at Cys769. The Di-leucine internalization motif motif lies at 860-861; the sequence is LL.

It belongs to the HIV-1 env protein family. As to quaternary structure, the mature envelope protein (Env) consists of a homotrimer of non-covalently associated gp120-gp41 heterodimers. The resulting complex protrudes from the virus surface as a spike. There seems to be as few as 10 spikes on the average virion. Interacts with host CD4, CCR5 and CXCR4. Gp120 also interacts with the C-type lectins CD209/DC-SIGN and CLEC4M/DC-SIGNR (collectively referred to as DC-SIGN(R)). Gp120 and gp41 interact with GalCer. Gp120 interacts with host ITGA4/ITGB7 complex; on CD4+ T-cells, this interaction results in rapid activation of integrin ITGAL/LFA-1, which facilitates efficient cell-to-cell spreading of HIV-1. Gp120 interacts with cell-associated heparan sulfate; this interaction increases virus infectivity on permissive cells and may be involved in infection of CD4- cells. The mature envelope protein (Env) consists of a homotrimer of non-covalently associated gp120-gp41 heterodimers. The resulting complex protrudes from the virus surface as a spike. There seems to be as few as 10 spikes on the average virion. Highly glycosylated by host. The high number of glycan on the protein is reffered to as 'glycan shield' because it contributes to hide protein sequence from adaptive immune system. Post-translationally, palmitoylation of the transmembrane protein and of Env polyprotein (prior to its proteolytic cleavage) is essential for their association with host cell membrane lipid rafts. Palmitoylation is therefore required for envelope trafficking to classical lipid rafts, but not for viral replication. In terms of processing, specific enzymatic cleavages in vivo yield mature proteins. Envelope glycoproteins are synthesized as an inactive precursor that is heavily N-glycosylated and processed likely by host cell furin in the Golgi to yield the mature SU and TM proteins. The cleavage site between SU and TM requires the minimal sequence [KR]-X-[KR]-R. About 2 of the 9 disulfide bonds of gp41 are reduced by P4HB/PDI, following binding to CD4 receptor.

The protein localises to the virion membrane. It localises to the host cell membrane. The protein resides in the host endosome membrane. Functionally, oligomerizes in the host endoplasmic reticulum into predominantly trimers. In a second time, gp160 transits in the host Golgi, where glycosylation is completed. The precursor is then proteolytically cleaved in the trans-Golgi and thereby activated by cellular furin or furin-like proteases to produce gp120 and gp41. Attaches the virus to the host lymphoid cell by binding to the primary receptor CD4. This interaction induces a structural rearrangement creating a high affinity binding site for a chemokine coreceptor like CXCR4 and/or CCR5. Acts as a ligand for CD209/DC-SIGN and CLEC4M/DC-SIGNR, which are respectively found on dendritic cells (DCs), and on endothelial cells of liver sinusoids and lymph node sinuses. These interactions allow capture of viral particles at mucosal surfaces by these cells and subsequent transmission to permissive cells. HIV subverts the migration properties of dendritic cells to gain access to CD4+ T-cells in lymph nodes. Virus transmission to permissive T-cells occurs either in trans (without DCs infection, through viral capture and transmission), or in cis (following DCs productive infection, through the usual CD4-gp120 interaction), thereby inducing a robust infection. In trans infection, bound virions remain infectious over days and it is proposed that they are not degraded, but protected in non-lysosomal acidic organelles within the DCs close to the cell membrane thus contributing to the viral infectious potential during DCs' migration from the periphery to the lymphoid tissues. On arrival at lymphoid tissues, intact virions recycle back to DCs' cell surface allowing virus transmission to CD4+ T-cells. In terms of biological role, acts as a class I viral fusion protein. Under the current model, the protein has at least 3 conformational states: pre-fusion native state, pre-hairpin intermediate state, and post-fusion hairpin state. During fusion of viral and target intracellular membranes, the coiled coil regions (heptad repeats) assume a trimer-of-hairpins structure, positioning the fusion peptide in close proximity to the C-terminal region of the ectodomain. The formation of this structure appears to drive apposition and subsequent fusion of viral and target cell membranes. Complete fusion occurs in host cell endosomes and is dynamin-dependent, however some lipid transfer might occur at the plasma membrane. The virus undergoes clathrin-dependent internalization long before endosomal fusion, thus minimizing the surface exposure of conserved viral epitopes during fusion and reducing the efficacy of inhibitors targeting these epitopes. Membranes fusion leads to delivery of the nucleocapsid into the cytoplasm. This chain is Envelope glycoprotein gp160, found in Homo sapiens (Human).